The following is a 62-amino-acid chain: uncharacterized protein (62 aa).

The protein resides in the plastid. It localises to the chloroplast. This is an uncharacterized protein from Porphyra purpurea (Red seaweed).